Reading from the N-terminus, the 165-residue chain is Large ribosomal subunit protein uL10 (165 aa).

This sequence belongs to the universal ribosomal protein uL10 family. As to quaternary structure, part of the ribosomal stalk of the 50S ribosomal subunit. The N-terminus interacts with L11 and the large rRNA to form the base of the stalk. The C-terminus forms an elongated spine to which L12 dimers bind in a sequential fashion forming a multimeric L10(L12)X complex.

Its function is as follows. Forms part of the ribosomal stalk, playing a central role in the interaction of the ribosome with GTP-bound translation factors. The sequence is that of Large ribosomal subunit protein uL10 from Edwardsiella ictaluri (strain 93-146).